The sequence spans 347 residues: MLFSYLLATLPLLANAALTYKGADISSVFIEEKAGVAYKNLAGETQALEAILTDNGVNSIRQRVWVKNGDYDLTYNVNLAKRVAATGASIYLDLHYSDDWADPKHQTTPDGWSTDDINTLADQIYQYTLSVCNTFAEEKINVEIVSIGNEITSGLLWPLGKTPNYENIARLLHSGAWGVKDSKLATKPKILIHLDNGWDWDQQKYFYDTALGTGLLTSDDFDMIGVSYYPFYNEKATLASLKTSLTNIQTTYGKEVAVVETNWPVKCSSPEFAFPADLKDIPFSVDGQVTFLQRLAETLTATKASGFFYWEPAWTKNAGLGSSCEDNLLVDYNTNQVRNSVKAFGQV.

The N-terminal stretch at 1-16 (MLFSYLLATLPLLANA) is a signal peptide. Glu-150 serves as the catalytic Proton donor. Glu-260 (nucleophile) is an active-site residue.

It belongs to the glycosyl hydrolase 53 family.

It is found in the secreted. The catalysed reaction is The enzyme specifically hydrolyzes (1-&gt;4)-beta-D-galactosidic linkages in type I arabinogalactans.. Endogalactanase involved in the degradation of plant cell wall polysaccharides, and more particularly of hairy regions of pectin. The protein is Probable arabinogalactan endo-beta-1,4-galactanase A (galA) of Aspergillus oryzae (strain ATCC 42149 / RIB 40) (Yellow koji mold).